The chain runs to 429 residues: 28S rRNA (cytosine-C(5))-methyltransferase (429 aa).

G2 bears the N-acetylglycine mark. S167 bears the Phosphoserine mark. Residues 234-240 (CAAPGNK), D258, R263, and D305 contribute to the S-adenosyl-L-methionine site. The active-site Nucleophile is C359.

It belongs to the class I-like SAM-binding methyltransferase superfamily. RsmB/NOP family. As to expression, ubiquitous. Detected in placenta, heart and skeletal muscle.

The protein resides in the nucleus. Its subcellular location is the nucleolus. It carries out the reaction cytidine(3782) in 28S rRNA + S-adenosyl-L-methionine = 5-methylcytidine(3782) in 28S rRNA + S-adenosyl-L-homocysteine + H(+). Functionally, S-adenosyl-L-methionine-dependent methyltransferase that specifically methylates the C(5) position of cytosine 3782 (m5C3782) in 28S rRNA. m5C3782 promotes protein translation without affecting ribosome biogenesis and fidelity. Required for corpus callosum and cerebral cortex development. This Homo sapiens (Human) protein is 28S rRNA (cytosine-C(5))-methyltransferase.